A 147-amino-acid polypeptide reads, in one-letter code: SsrA-binding protein (147 aa).

Residues 124–147 are disordered; sequence KKHDKRQDIKDRDWARKQARQDFS. Over residues 128–147 the composition is skewed to basic and acidic residues; it reads KRQDIKDRDWARKQARQDFS.

This sequence belongs to the SmpB family.

Its subcellular location is the cytoplasm. Required for rescue of stalled ribosomes mediated by trans-translation. Binds to transfer-messenger RNA (tmRNA), required for stable association of tmRNA with ribosomes. tmRNA and SmpB together mimic tRNA shape, replacing the anticodon stem-loop with SmpB. tmRNA is encoded by the ssrA gene; the 2 termini fold to resemble tRNA(Ala) and it encodes a 'tag peptide', a short internal open reading frame. During trans-translation Ala-aminoacylated tmRNA acts like a tRNA, entering the A-site of stalled ribosomes, displacing the stalled mRNA. The ribosome then switches to translate the ORF on the tmRNA; the nascent peptide is terminated with the 'tag peptide' encoded by the tmRNA and targeted for degradation. The ribosome is freed to recommence translation, which seems to be the essential function of trans-translation. This is SsrA-binding protein from Neorickettsia sennetsu (strain ATCC VR-367 / Miyayama) (Ehrlichia sennetsu).